A 682-amino-acid polypeptide reads, in one-letter code: Acyl-CoA synthetase short-chain family member 3, mitochondrial (682 aa).

The transit peptide at Met1 to Gly29 directs the protein to the mitochondrion. Glu222 to Arg225 provides a ligand contact to CoA. ATP contacts are provided by residues Gly420–Arg422 and Asp441–Thr446. Position 513 is an N6-succinyllysine (Lys513). An N6-acetyllysine modification is found at Lys519. Residues Asp534, Arg549, and Arg560 each contribute to the ATP site. Arg619 provides a ligand contact to CoA.

The protein belongs to the ATP-dependent AMP-binding enzyme family.

The protein localises to the mitochondrion matrix. It carries out the reaction acetate + ATP + CoA = acetyl-CoA + AMP + diphosphate. The catalysed reaction is propanoate + ATP + CoA = propanoyl-CoA + AMP + diphosphate. It catalyses the reaction butanoate + ATP + CoA = butanoyl-CoA + AMP + diphosphate. Its function is as follows. Catalyzes the synthesis of acetyl-CoA from short-chain fatty acids. Propionate is the preferred substrate but can also utilize acetate and butyrate with a much lower affinity. This is Acyl-CoA synthetase short-chain family member 3, mitochondrial (Acss3) from Mus musculus (Mouse).